Consider the following 880-residue polypeptide: uncharacterized protein (880 aa).

Disordered regions lie at residues 101-149 (KPIP…LRSE), 191-224 (PETSTPLISQSSQTSTITPSSSSTSTSTSSISTH), 240-273 (TTTTTTSSSSSSPPSSSIAGITNPTSRSSSPILK), 294-350 (NSNS…STTS), 425-446 (QPDSKDDESSVKSPPLPVESQP), 470-508 (STSTSPSSTTTTTSTTTSIIAEEPSSPILPTASPSSSSS), 536-561 (MESSTTTTLLSENNGGGGGSSCNDNS), 580-613 (APQSDSMIEQPEDDPFFDFEDLSDDDDSNDNDDE), 682-713 (NTNTNTNTNTNTNTNTNTNTNTNTNTNANINN), and 844-880 (NSSGSGNNSNDNSGSSSPSSSKTNTLNQQSICIKSEI). Positions 113–147 (ISIKEKEKEKEKEKEKEKEKEKEKEKEMKSTINLR) form a coiled coil. A compositionally biased stretch (basic and acidic residues) spans 115-149 (IKEKEKEKEKEKEKEKEKEKEKEKEMKSTINLRSE). Composition is skewed to low complexity over residues 193 to 223 (TSTPLISQSSQTSTITPSSSSTSTSTSSIST) and 240 to 256 (TTTTTTSSSSSSPPSSS). Residues 257 to 271 (IAGITNPTSRSSSPI) are compositionally biased toward polar residues. A compositionally biased stretch (low complexity) spans 294–332 (NSNSSSGGGNNNNKSISTPSSPIISRPITNKINNNNNNN). The span at 333-342 (QPQLHYNQPQ) shows a compositional bias: polar residues. Over residues 536–548 (MESSTTTTLLSEN) the composition is skewed to low complexity. Positions 589–613 (QPEDDPFFDFEDLSDDDDSNDNDDE) are enriched in acidic residues. A compositionally biased stretch (low complexity) spans 844-864 (NSSGSGNNSNDNSGSSSPSSS). Residues 865–880 (KTNTLNQQSICIKSEI) show a composition bias toward polar residues.

This is an uncharacterized protein from Dictyostelium discoideum (Social amoeba).